We begin with the raw amino-acid sequence, 432 residues long: Negative regulator of systemic acquired resistance SNI1 (432 aa).

In terms of assembly, interacts with SSN2. Binds to NTL9/CBNAC to promote its binding to promoters of target genes. Component of the SMC5-SMC6 complex which consists at least of SMC5 and SMC6B. Interacts with RAD17. In terms of tissue distribution, expressed at low levels in the veins.

The protein localises to the nucleus. Functionally, component of the SMC5-SMC6 complex, a complex involved in repair of DNA double-strand breaks by homologous recombination. Transcription repressor that prevents expression of pathogenesis-related genes (PR) via histone modifications and binding negative cis-acting elements at their promoters. Negative regulator of hypersensitive response (HR) and systemic acquired resistance (SAR) required to dampen the basal expression of pathogenesis related (PR) genes. Functions synergistically with NTL9/CBNAC as negative regulator of pathogen-induced PR1 expression and basal resistance to a virulent strain of P.syringae. Binds to the PR1 gene promoter to suppress defense response in the absence of pathogen challenge and is removed in response to induction. Negatively regulates both gene expression and DNA recombination during pathogen infection, thus being involved in short-term defense response and a long-term survival strategy. Prevents effective immune responses that involve activation of DNA damage responses, probably by negatively regulating the DNA damage sensors RAD17 and ATR. Negative regulator of defenses against the beet cyst nematode H.schachtii. The protein is Negative regulator of systemic acquired resistance SNI1 of Arabidopsis thaliana (Mouse-ear cress).